We begin with the raw amino-acid sequence, 321 residues long: Aspartate carbamoyltransferase catalytic subunit (321 aa).

Arginine 64 and threonine 65 together coordinate carbamoyl phosphate. Lysine 92 contributes to the L-aspartate binding site. The carbamoyl phosphate site is built by arginine 114, histidine 142, and glutamine 145. Residues arginine 175 and arginine 229 each contribute to the L-aspartate site. Residues glycine 270 and proline 271 each contribute to the carbamoyl phosphate site.

The protein belongs to the aspartate/ornithine carbamoyltransferase superfamily. ATCase family. Heterododecamer (2C3:3R2) of six catalytic PyrB chains organized as two trimers (C3), and six regulatory PyrI chains organized as three dimers (R2).

It carries out the reaction carbamoyl phosphate + L-aspartate = N-carbamoyl-L-aspartate + phosphate + H(+). Its pathway is pyrimidine metabolism; UMP biosynthesis via de novo pathway; (S)-dihydroorotate from bicarbonate: step 2/3. Catalyzes the condensation of carbamoyl phosphate and aspartate to form carbamoyl aspartate and inorganic phosphate, the committed step in the de novo pyrimidine nucleotide biosynthesis pathway. The polypeptide is Aspartate carbamoyltransferase catalytic subunit (Azorhizobium caulinodans (strain ATCC 43989 / DSM 5975 / JCM 20966 / LMG 6465 / NBRC 14845 / NCIMB 13405 / ORS 571)).